The sequence spans 164 residues: uncharacterized protein (164 aa).

Helical transmembrane passes span 25–45 (QFGF…PLLG), 63–83 (GMAV…VYIV), 120–140 (FWTA…ADFF), and 141–161 (TVQM…LMMM).

It belongs to the major facilitator superfamily.

It localises to the cell membrane. This is an uncharacterized protein from Bacillus subtilis (strain 168).